The chain runs to 231 residues: Albumin-2 (231 aa).

4 Hemopexin repeats span residues 4-55, 62-112, 118-166, and 172-223; these read TGYI…FKSL, SYGV…FPFF, ENGI…FPCF, and ESGT…WPSL. The Ca(2+) site is built by N8, D66, D122, and D176.

In terms of assembly, monomer and homodimer.

Its subcellular location is the cytoplasm. The protein resides in the cytosol. May play a role in response to oxidative stress and polyamine biosynthesis. This chain is Albumin-2, found in Pisum sativum (Garden pea).